Reading from the N-terminus, the 421-residue chain is General transcription factor IIH subunit 2 (421 aa).

The tract at residues 1–26 (MSNQRKRSNDEREEEDDEDAEGIGEW) is disordered. The segment covering 11 to 24 (EREEEDDEDAEGIG) has biased composition (acidic residues). A VWFA domain is found at 83–272 (YLYIVIDFSR…IAEFAIANLI (190 aa)). The segment at 362–408 (CFGCQQSLIGAGNKPVPCVTCRKCKHYFCLDCDIYIHESLHNCPGCE) adopts an RING-type zinc-finger fold.

The protein belongs to the GTF2H2 family. Component of the 7-subunit TFIIH core complex composed of XPB, XPD, TFB1/GTF2H1, GTF2H2/P44, TFB4/GTF2H3, TFB2/GTF2H4 and TFB5/GTF2H5, which is active in NER. The core complex associates with the 3-subunit CDK-activating kinase (CAK) module composed of CYCH1/cyclin H1, CDKD and MAT1/At4g30820 to form the 10-subunit holoenzyme (holo-TFIIH) active in transcription. Interacts with XPD.

The protein localises to the nucleus. In terms of biological role, component of the general transcription and DNA repair factor IIH (TFIIH) core complex, which is involved in general and transcription-coupled nucleotide excision repair (NER) of damaged DNA and, when complexed to CAK, in RNA transcription by RNA polymerase II. In NER, TFIIH acts by opening DNA around the lesion to allow the excision of the damaged oligonucleotide and its replacement by a new DNA fragment. In transcription, TFIIH has an essential role in transcription initiation. When the pre-initiation complex (PIC) has been established, TFIIH is required for promoter opening and promoter escape. Phosphorylation of the C-terminal tail (CTD) of the largest subunit of RNA polymerase II by the kinase module CAK controls the initiation of transcription. Can restore UV resistance in the NER-deficient ssl1-1 yeast mutant. The sequence is that of General transcription factor IIH subunit 2 from Arabidopsis thaliana (Mouse-ear cress).